The following is a 392-amino-acid chain: Galactokinase (392 aa).

Residue 40 to 43 (EHID) coordinates substrate. ATP is bound by residues S74 and 128–134 (GSGLSSS). Mg(2+)-binding residues include S134 and E167. D179 (proton acceptor) is an active-site residue. Y229 is a substrate binding site.

This sequence belongs to the GHMP kinase family. GalK subfamily.

The protein localises to the cytoplasm. It catalyses the reaction alpha-D-galactose + ATP = alpha-D-galactose 1-phosphate + ADP + H(+). The protein operates within carbohydrate metabolism; galactose metabolism. Catalyzes the transfer of the gamma-phosphate of ATP to D-galactose to form alpha-D-galactose-1-phosphate (Gal-1-P). In Clostridium tetani (strain Massachusetts / E88), this protein is Galactokinase.